The primary structure comprises 623 residues: V-type proton ATPase catalytic subunit A (623 aa).

252-259 contacts ATP; sequence GAFGCGKT.

It belongs to the ATPase alpha/beta chains family. As to quaternary structure, V-ATPase is a heteromultimeric enzyme composed of a peripheral catalytic V1 complex (main components: subunits A, B, C, D, E, and F) attached to an integral membrane V0 proton pore complex (main component: the proteolipid protein).

It catalyses the reaction ATP + H2O + 4 H(+)(in) = ADP + phosphate + 5 H(+)(out). Functionally, catalytic subunit of the peripheral V1 complex of vacuolar ATPase. V-ATPase vacuolar ATPase is responsible for acidifying a variety of intracellular compartments in eukaryotic cells. This Daucus carota (Wild carrot) protein is V-type proton ATPase catalytic subunit A.